A 573-amino-acid polypeptide reads, in one-letter code: Phosphoenolpyruvate-protein phosphotransferase (573 aa).

The active-site Tele-phosphohistidine intermediate is His-190. The phosphoenolpyruvate site is built by Arg-297 and Arg-334. Mg(2+) is bound by residues Glu-433 and Asp-457. Phosphoenolpyruvate is bound by residues 456–457 (ND) and Arg-467. Cys-504 serves as the catalytic Proton donor.

It belongs to the PEP-utilizing enzyme family. In terms of assembly, homodimer. The cofactor is Mg(2+).

The protein resides in the cytoplasm. The catalysed reaction is L-histidyl-[protein] + phosphoenolpyruvate = N(pros)-phospho-L-histidyl-[protein] + pyruvate. Its function is as follows. General (non sugar-specific) component of the phosphoenolpyruvate-dependent sugar phosphotransferase system (sugar PTS). This major carbohydrate active-transport system catalyzes the phosphorylation of incoming sugar substrates concomitantly with their translocation across the cell membrane. Enzyme I transfers the phosphoryl group from phosphoenolpyruvate (PEP) to the phosphoryl carrier protein (HPr). The sequence is that of Phosphoenolpyruvate-protein phosphotransferase (ptsI) from Borreliella burgdorferi (strain ATCC 35210 / DSM 4680 / CIP 102532 / B31) (Borrelia burgdorferi).